A 343-amino-acid chain; its full sequence is N6-succino-2-amino-2'-deoxyadenylate synthase (343 aa).

Serine 14 acts as the Proton acceptor in catalysis. Residues serine 14, threonine 15, glycine 16, lysine 17, and glycine 18 each coordinate ATP. Residue serine 14 participates in dGMP binding. Serine 14 is a binding site for Mg(2+). Asparagine 40 serves as a coordination point for dGMP. ATP-binding residues include glycine 42, histidine 43, and threonine 44. Glycine 42 lines the Mg(2+) pocket. Positions 127, 128, and 142 each coordinate dGMP. An ATP-binding site is contributed by glutamine 187. Residue threonine 202 participates in dGMP binding. Threonine 263 contacts Mg(2+). L-aspartate contacts are provided by threonine 263, valine 264, and arginine 269. Residues asparagine 294, asparagine 297, and glycine 330 each coordinate ATP.

It belongs to the Caudovirales PurZ family. Mg(2+) serves as cofactor.

It catalyses the reaction dGMP + L-aspartate + ATP = (2S)-2-amino-2'-deoxyadenylo-succinate + ADP + phosphate + 2 H(+). It participates in purine metabolism. Functionally, involved in the synthesis of the atypical nucleotide dZTP (2-amino-2'-deoxyadenosine-5'-triphosphate). Catalyzes the condensation of aspartate with deoxyguanylate into dSMP (N6-succino-2-amino-2'-deoxyadenylate), which undergoes defumarylation and phosphorylation respectively by host PurB and guanylate/nucleoside diphosphate kinases to give dZTP. dZTP is integrated into the viral genome instead of adenine by the viral DNA polymerase. This Z-base probably completely replaces adenosine and forms a triple bond to the opposite T-base. The resulting non-standard viral DNA is called Z-genome. The chemically modified DNA is probably harder for the host bacteria to digest with nucleases or restriction enzymes. The protein is N6-succino-2-amino-2'-deoxyadenylate synthase of Vibrio phage phiVC8.